The following is a 141-amino-acid chain: Hemoglobin subunit alpha-D (141 aa).

The Globin domain maps to 1 to 141 (MLTADDKKLL…VAAVLAEKYR (141 aa)). The heme b site is built by histidine 58 and histidine 87.

Belongs to the globin family. In terms of assembly, heterotetramer of two alpha-D chains and two beta chains. Red blood cells.

Its function is as follows. Involved in oxygen transport from the lung to the various peripheral tissues. The sequence is that of Hemoglobin subunit alpha-D (HBAD) from Anser anser anser (Western greylag goose).